Consider the following 154-residue polypeptide: Small ribosomal subunit protein bS16 (154 aa).

Over residues 111–121 (AAAGLAEAPTK) the composition is skewed to low complexity. The segment at 111–154 (AAAGLAEAPTKPAKKAAKAEAAPKTDEAAPKTEEQAGAGSGEQG) is disordered. Basic and acidic residues predominate over residues 127–144 (AKAEAAPKTDEAAPKTEE).

The protein belongs to the bacterial ribosomal protein bS16 family.

The sequence is that of Small ribosomal subunit protein bS16 from Salinispora tropica (strain ATCC BAA-916 / DSM 44818 / JCM 13857 / NBRC 105044 / CNB-440).